Consider the following 4466-residue polypeptide: Dynein beta chain, ciliary (4466 aa).

The segment at 1 to 1813 (MADVVDPRLE…YANICDAQFK (1813 aa)) is stem. ATP is bound at residue 154-161 (AGQVKGKT). 4 coiled-coil regions span residues 733–805 (TVLE…WTKQ), 1036–1056 (TLDQFKEQVDTYEKIYSEADE), 1306–1337 (WLEINVEQMEMDCKKFAKDIRSLDKEMRAWDA), and 1443–1468 (LLKSNEELIETLEDNQVQLQNLMTSK). AAA stretches follow at residues 1814–2035 (YSYE…VLVV), 2095–2316 (KVVK…VRFK), 2422–2669 (ELDP…VFQG), and 2767–3016 (TYNE…ERRY). Residues 1852-1859 (GPAGTGKT), 2133-2140 (GNAGTGKS), 2460-2467 (GNAGLGKS), and 2805-2812 (GVGGSGKQ) contribute to the ATP site. Coiled coils occupy residues 3033–3092 (SLLS…QVVG), 3263–3325 (EPKR…SRTI), and 3573–3642 (QERP…EEAK). The segment at 3033–3325 (SLLSMKSKEL…QEAEATSRTI (293 aa)) is stalk. 2 AAA regions span residues 3409–3636 (LTDD…EISV) and 3846–4072 (VRNF…VLYN).

It belongs to the dynein heavy chain family. As to quaternary structure, consists of at least two heavy chains (alpha and beta), three intermediate chains and several light chains.

The protein resides in the cell projection. It is found in the cilium. It localises to the flagellum. The protein localises to the cytoplasm. Its subcellular location is the cytoskeleton. The protein resides in the flagellum axoneme. In terms of biological role, force generating protein of eukaryotic cilia and flagella. Produces force towards the minus ends of microtubules. Dynein has ATPase activity; the force-producing power stroke is thought to occur on release of ADP. In Tripneustes gratilla (Hawaian sea urchin), this protein is Dynein beta chain, ciliary.